The sequence spans 421 residues: Probable dual-specificity RNA methyltransferase RlmN (421 aa).

A disordered region spans residues 1-23 (MTATTAESGRPDQPPTAEAGRPV). Residue E127 is the Proton acceptor of the active site. The 240-residue stretch at 133 to 372 (YPDRATVCVS…VTTVRDTRGR (240 aa)) folds into the Radical SAM core domain. Cysteines 140 and 378 form a disulfide. 3 residues coordinate [4Fe-4S] cluster: C147, C151, and C154. Residues 202–203 (GE), S236, 259–261 (SLH), and N335 contribute to the S-adenosyl-L-methionine site. Catalysis depends on C378, which acts as the S-methylcysteine intermediate. Residues 383-421 (AEPAGKPERTDRPEQVGSDRLVEFGAVGSTTPDGDRVLR) are disordered. Residues 387-396 (GKPERTDRPE) show a composition bias toward basic and acidic residues.

It belongs to the radical SAM superfamily. RlmN family. [4Fe-4S] cluster serves as cofactor.

The protein resides in the cytoplasm. The catalysed reaction is adenosine(2503) in 23S rRNA + 2 reduced [2Fe-2S]-[ferredoxin] + 2 S-adenosyl-L-methionine = 2-methyladenosine(2503) in 23S rRNA + 5'-deoxyadenosine + L-methionine + 2 oxidized [2Fe-2S]-[ferredoxin] + S-adenosyl-L-homocysteine. It carries out the reaction adenosine(37) in tRNA + 2 reduced [2Fe-2S]-[ferredoxin] + 2 S-adenosyl-L-methionine = 2-methyladenosine(37) in tRNA + 5'-deoxyadenosine + L-methionine + 2 oxidized [2Fe-2S]-[ferredoxin] + S-adenosyl-L-homocysteine. Its function is as follows. Specifically methylates position 2 of adenine 2503 in 23S rRNA and position 2 of adenine 37 in tRNAs. In Frankia casuarinae (strain DSM 45818 / CECT 9043 / HFP020203 / CcI3), this protein is Probable dual-specificity RNA methyltransferase RlmN.